Reading from the N-terminus, the 513-residue chain is Sterol 14-alpha demethylase (513 aa).

The helical transmembrane segment at 10–30 threads the bilayer; that stretch reads FTLVSAYAAAGLLAIIVLNLL. Asn-37 and Asn-406 each carry an N-linked (GlcNAc...) asparagine glycan. Cys-453 is a heme binding site.

The protein belongs to the cytochrome P450 family. Heme is required as a cofactor.

It is found in the endoplasmic reticulum membrane. The catalysed reaction is a 14alpha-methyl steroid + 3 reduced [NADPH--hemoprotein reductase] + 3 O2 = a Delta(14) steroid + formate + 3 oxidized [NADPH--hemoprotein reductase] + 4 H2O + 4 H(+). It catalyses the reaction a 14alpha-methyl steroid + reduced [NADPH--hemoprotein reductase] + O2 = a 14alpha-hydroxymethyl steroid + oxidized [NADPH--hemoprotein reductase] + H2O + H(+). The enzyme catalyses a 14alpha-hydroxymethyl steroid + reduced [NADPH--hemoprotein reductase] + O2 = a 14alpha-formyl steroid + oxidized [NADPH--hemoprotein reductase] + 2 H2O + H(+). It carries out the reaction a 14alpha-formyl steroid + reduced [NADPH--hemoprotein reductase] + O2 = a Delta(14) steroid + formate + oxidized [NADPH--hemoprotein reductase] + H2O + 2 H(+). The catalysed reaction is lanosterol + 3 reduced [NADPH--hemoprotein reductase] + 3 O2 = 4,4-dimethyl-5alpha-cholesta-8,14,24-trien-3beta-ol + formate + 3 oxidized [NADPH--hemoprotein reductase] + 4 H2O + 4 H(+). It catalyses the reaction lanosterol + reduced [NADPH--hemoprotein reductase] + O2 = 32-hydroxylanosterol + oxidized [NADPH--hemoprotein reductase] + H2O + H(+). The enzyme catalyses 32-hydroxylanosterol + reduced [NADPH--hemoprotein reductase] + O2 = 32-oxolanosterol + oxidized [NADPH--hemoprotein reductase] + 2 H2O + H(+). It carries out the reaction 32-oxolanosterol + reduced [NADPH--hemoprotein reductase] + O2 = 4,4-dimethyl-5alpha-cholesta-8,14,24-trien-3beta-ol + formate + oxidized [NADPH--hemoprotein reductase] + H2O + 2 H(+). The catalysed reaction is eburicol + 3 reduced [NADPH--hemoprotein reductase] + 3 O2 = 14-demethyleburicol + formate + 3 oxidized [NADPH--hemoprotein reductase] + 4 H2O + 4 H(+). It catalyses the reaction eburicol + reduced [NADPH--hemoprotein reductase] + O2 = 32-hydroxyeburicol + oxidized [NADPH--hemoprotein reductase] + H2O + H(+). The enzyme catalyses 32-hydroxyeburicol + reduced [NADPH--hemoprotein reductase] + O2 = 32-oxoeburicol + oxidized [NADPH--hemoprotein reductase] + 2 H2O + H(+). It carries out the reaction 32-oxoeburicol + reduced [NADPH--hemoprotein reductase] + O2 = 14-demethyleburicol + formate + oxidized [NADPH--hemoprotein reductase] + H2O + 2 H(+). Its pathway is steroid biosynthesis; sterol biosynthesis. Functionally, sterol 14alpha-demethylase, encoded by cyp51A, cyp51B and cyp51C, that plays a critical role in the third module of ergosterol biosynthesis pathway, being ergosterol the major sterol component in fungal membranes that participates in a variety of functions. The third module or late pathway involves the ergosterol synthesis itself through consecutive reactions that mainly occur in the endoplasmic reticulum (ER) membrane. In filamentous fungi, during the initial step of this module, lanosterol (lanosta-8,24-dien-3beta-ol) can be metabolized to eburicol. Sterol 14alpha-demethylase catalyzes the three-step oxidative removal of the 14alpha-methyl group (C-32) of both these sterols in the form of formate, and converts eburicol and lanosterol to 14-demethyleburicol (4,4,24-trimethylergosta-8,14,24(28)-trienol) and 4,4-dimethyl-5alpha-cholesta-8,14,24-trien-3beta-ol, respectively, which are further metabolized by other enzymes in the pathway to ergosterol. Can also use substrates not intrinsic to fungi, such as 24,25-dihydrolanosterol (DHL), producing 4,4'-dimethyl-8,14-cholestadien-3-beta-ol, but at lower rates than the endogenous substrates. In terms of biological role, as a target of azole drugs, plays a crucial role in azole susceptibility. The sequence is that of Sterol 14-alpha demethylase from Aspergillus flavus (strain ATCC 200026 / FGSC A1120 / IAM 13836 / NRRL 3357 / JCM 12722 / SRRC 167).